A 386-amino-acid chain; its full sequence is Succinate--CoA ligase [ADP-forming] subunit beta (386 aa).

The ATP-grasp domain maps to 9 to 244 (KEIFRKYGVP…LAEEEPREIQ (236 aa)). Residues K46, 53–55 (GRG), E99, L102, and E107 each bind ATP. Positions 199 and 213 each coordinate Mg(2+). Substrate is bound by residues N264 and 321–323 (GIM).

This sequence belongs to the succinate/malate CoA ligase beta subunit family. Heterotetramer of two alpha and two beta subunits. Requires Mg(2+) as cofactor.

The catalysed reaction is succinate + ATP + CoA = succinyl-CoA + ADP + phosphate. It carries out the reaction GTP + succinate + CoA = succinyl-CoA + GDP + phosphate. The protein operates within carbohydrate metabolism; tricarboxylic acid cycle; succinate from succinyl-CoA (ligase route): step 1/1. Functionally, succinyl-CoA synthetase functions in the citric acid cycle (TCA), coupling the hydrolysis of succinyl-CoA to the synthesis of either ATP or GTP and thus represents the only step of substrate-level phosphorylation in the TCA. The beta subunit provides nucleotide specificity of the enzyme and binds the substrate succinate, while the binding sites for coenzyme A and phosphate are found in the alpha subunit. The protein is Succinate--CoA ligase [ADP-forming] subunit beta of Myxococcus xanthus (strain DK1622).